Here is a 159-residue protein sequence, read N- to C-terminus: 17 kDa surface antigen (159 aa).

The first 19 residues, 1–19 (MKLLSKIMIIALAASMLQA), serve as a signal peptide directing secretion. The N-palmitoyl cysteine moiety is linked to residue C20. Residue C20 is the site of S-diacylglycerol cysteine attachment.

The protein belongs to the rickettsiale 17 kDa surface antigen family.

It localises to the cell outer membrane. This Rickettsia felis (strain ATCC VR-1525 / URRWXCal2) (Rickettsia azadi) protein is 17 kDa surface antigen (omp).